Reading from the N-terminus, the 387-residue chain is Probable peptidoglycan glycosyltransferase FtsW (387 aa).

Transmembrane regions (helical) follow at residues 20 to 40 (LYLLGAAVALMGLGWVMVGSA), 61 to 81 (LFLLLGLVTAFGVWRIRLAFW), 86 to 106 (PVMLLLGLGLLLLTLIPGIGV), 149 to 169 (TIRGFLFPVGVFAMAGLLLLL), 172 to 192 (DFGAVVVLFATLLGMLFLGGA), 194 to 214 (LWHFLLLAALGGASLAALAWY), 284 to 304 (LMGSLAVIALFVVFIYRVLLI), 322 to 342 (GLGIWIGLQAFINLGVNMGVL), and 349 to 369 (LPLMSAGGSSSIVTCVAVALI).

The protein belongs to the SEDS family. FtsW subfamily.

Its subcellular location is the cell inner membrane. The enzyme catalyses [GlcNAc-(1-&gt;4)-Mur2Ac(oyl-L-Ala-gamma-D-Glu-L-Lys-D-Ala-D-Ala)](n)-di-trans,octa-cis-undecaprenyl diphosphate + beta-D-GlcNAc-(1-&gt;4)-Mur2Ac(oyl-L-Ala-gamma-D-Glu-L-Lys-D-Ala-D-Ala)-di-trans,octa-cis-undecaprenyl diphosphate = [GlcNAc-(1-&gt;4)-Mur2Ac(oyl-L-Ala-gamma-D-Glu-L-Lys-D-Ala-D-Ala)](n+1)-di-trans,octa-cis-undecaprenyl diphosphate + di-trans,octa-cis-undecaprenyl diphosphate + H(+). The protein operates within cell wall biogenesis; peptidoglycan biosynthesis. In terms of biological role, peptidoglycan polymerase that is essential for cell division. This Nitrosococcus halophilus (strain Nc4) protein is Probable peptidoglycan glycosyltransferase FtsW.